We begin with the raw amino-acid sequence, 102 residues long: Flagellar hook-basal body complex protein FliE (102 aa).

The protein belongs to the FliE family.

It localises to the bacterial flagellum basal body. The polypeptide is Flagellar hook-basal body complex protein FliE (Oceanobacillus iheyensis (strain DSM 14371 / CIP 107618 / JCM 11309 / KCTC 3954 / HTE831)).